Reading from the N-terminus, the 79-residue chain is UPF0401 protein YkfF (79 aa).

This sequence belongs to the UPF0401 family.

In Escherichia coli (strain K12), this protein is UPF0401 protein YkfF (ykfF).